We begin with the raw amino-acid sequence, 155 residues long: UPF0060 membrane protein MA_3936 (155 aa).

3 consecutive transmembrane segments (helical) span residues 8–28 (LCPFFLAALFEIRGGYLICLW), 35–55 (AVFGPLGRLMLAVCGIIPTFQ), and 62–82 (VYAAHGGIFIVFSLIWDLFVD).

The protein belongs to the UPF0060 family.

Its subcellular location is the cell membrane. This is UPF0060 membrane protein MA_3936 from Methanosarcina acetivorans (strain ATCC 35395 / DSM 2834 / JCM 12185 / C2A).